Reading from the N-terminus, the 118-residue chain is UPF0344 protein YisL (118 aa).

The next 4 membrane-spanning stretches (helical) occupy residues 4-24 (LHITTWVVALILLFVSYSLYS), 33-53 (ITHMILRLFYILIILTGAELF), 62-82 (EYAGKMILGIITIGLMEMLLI), and 93-113 (LWVGFVIVLLLTVLLGLHLPI).

The protein belongs to the UPF0344 family.

The protein resides in the cell membrane. In Bacillus subtilis (strain 168), this protein is UPF0344 protein YisL (yisL).